A 139-amino-acid chain; its full sequence is Exodeoxyribonuclease 7 small subunit (139 aa).

2 disordered regions span residues 1-26 (MAKKKRNPSAEEAGDGEQTAAELGDF) and 82-139 (DAEG…EDDE). The segment covering 130–139 (ADLDSAEDDE) has biased composition (acidic residues).

It belongs to the XseB family. As to quaternary structure, heterooligomer composed of large and small subunits.

The protein localises to the cytoplasm. The catalysed reaction is Exonucleolytic cleavage in either 5'- to 3'- or 3'- to 5'-direction to yield nucleoside 5'-phosphates.. Bidirectionally degrades single-stranded DNA into large acid-insoluble oligonucleotides, which are then degraded further into small acid-soluble oligonucleotides. The polypeptide is Exodeoxyribonuclease 7 small subunit (Rhodopirellula baltica (strain DSM 10527 / NCIMB 13988 / SH1)).